A 404-amino-acid polypeptide reads, in one-letter code: Putative Peroxidase 48 (404 aa).

Residues 1–18 (MRFLGDYKFALLTCSVIA) form the signal peptide. 4 cysteine pairs are disulfide-bonded: Cys77–Cys156, Cys110–Cys115, Cys162–Cys397, and Cys241–Cys273. His108 acts as the Proton acceptor in catalysis. Positions 109, 112, 114, 116, and 118 each coordinate Ca(2+). N-linked (GlcNAc...) asparagine glycosylation occurs at Asn136. Pro204 contacts substrate. Heme b is bound at residue His234. Ser235 serves as a coordination point for Ca(2+). Asn250 carries an N-linked (GlcNAc...) asparagine glycan. Positions 276 to 307 (SVSTSSPSAPPDIGLPPSLPASDSENSYGMSS) are disordered. A compositionally biased stretch (pro residues) spans 283–294 (SAPPDIGLPPSL). Asp287 provides a ligand contact to Ca(2+). Positions 296–307 (ASDSENSYGMSS) are enriched in polar residues.

Belongs to the peroxidase family. Classical plant (class III) peroxidase subfamily. Heme b serves as cofactor. Ca(2+) is required as a cofactor.

The protein resides in the secreted. The enzyme catalyses 2 a phenolic donor + H2O2 = 2 a phenolic radical donor + 2 H2O. Removal of H(2)O(2), oxidation of toxic reductants, biosynthesis and degradation of lignin, suberization, auxin catabolism, response to environmental stresses such as wounding, pathogen attack and oxidative stress. These functions might be dependent on each isozyme/isoform in each plant tissue. In Arabidopsis thaliana (Mouse-ear cress), this protein is Putative Peroxidase 48 (PER48).